Here is a 105-residue protein sequence, read N- to C-terminus: Guanyl-specific ribonuclease U1 (105 aa).

Residue Gln-1 is modified to Pyrrolidone carboxylic acid. Cystine bridges form between Cys-8-Cys-103 and Cys-51-Cys-87. The active site involves His-37. The active-site Proton acceptor is the Glu-57. His-92 functions as the Proton donor in the catalytic mechanism.

Belongs to the ribonuclease N1/T1 family.

It carries out the reaction [RNA] containing guanosine + H2O = an [RNA fragment]-3'-guanosine-3'-phosphate + a 5'-hydroxy-ribonucleotide-3'-[RNA fragment].. The protein is Guanyl-specific ribonuclease U1 of Ustilago sphaerogena (Smut fungus).